Consider the following 526-residue polypeptide: Keratin, type I cytoskeletal 10 (526 aa).

Over residues 1–16 (MSVRFSSNSRQYSSAR) the composition is skewed to low complexity. Residues 1–40 (MSVRFSSNSRQYSSARSGGGGGGGGGGSSIRVSSTKSSLG) are disordered. The tract at residues 1–144 (MSVRFSSNSR…GDGGGLLSGN (144 aa)) is head. Phosphoserine occurs at positions 17, 38, 49, 52, and 169. Residues 17 to 28 (SGGGGGGGGGGS) show a composition bias toward gly residues. The interval 145–180 (EKVTMQNLNDRLASYMNKVRDLEESNYELEGKIKEW) is coil 1A. An IF rod domain is found at 145–459 (EKVTMQNLND…SLLEGEGGYV (315 aa)). Residues 181 to 201 (YEKHGNSSQREPRDYSKYYKT) form a linker 1 region. The tract at residues 202-293 (IEDLKGQIVN…KNHEEEMKDL (92 aa)) is coil 1B. Positions 294–316 (QNVSTGDVNVEMNAAPGVDLTQL) are linker 12. The tract at residues 317–455 (LNNMRNQYEQ…QTYRSLLEGE (139 aa)) is coil 2. The interval 456–526 (GGYVGNLQIT…IESETKKHFY (71 aa)) is tail.

The protein belongs to the intermediate filament family. Heterotetramer of two type I and two type II keratins. Heterodimer with KRT1. Two heterodimers of KRT1 and KRT10 form a heterotetramer. The KRT10 subunit in the heterotetramer is probably disulfide-linked.

The protein resides in the secreted. It localises to the extracellular space. It is found in the cell surface. Its subcellular location is the cytoplasm. In terms of biological role, plays a role in the establishment of the epidermal barrier on plantar skin. Involved in the maintenance of cell layer development and keratin filament bundles in suprabasal cells of the epithelium. This is Keratin, type I cytoskeletal 10 from Rattus norvegicus (Rat).